Reading from the N-terminus, the 657-residue chain is Bifunctional lysine-specific demethylase and histidyl-hydroxylase NO66 (657 aa).

Disordered stretches follow at residues Met1–Pro141 and Lys165–Glu198. A compositionally biased stretch (polar residues) spans Ser32 to Asp41. Residues Ala55–Gly71 show a composition bias toward basic and acidic residues. 2 stretches are compositionally biased toward polar residues: residues Ser73 to Arg84 and Arg132 to Pro141. At Ser133 the chain carries Phosphoserine. Residue Thr139 is modified to Phosphothreonine. The residue at position 140 (Ser140) is a Phosphoserine. Residues Asn315–Val454 enclose the JmjC domain. Residues His355, Asp357, and His420 each coordinate Fe cation.

Belongs to the ROX family. NO66 subfamily. The cofactor is Fe(2+).

The protein localises to the nucleus. The enzyme catalyses N(6),N(6)-dimethyl-L-lysyl(36)-[histone H3] + 2 2-oxoglutarate + 2 O2 = L-lysyl(36)-[histone H3] + 2 formaldehyde + 2 succinate + 2 CO2. In terms of biological role, oxygenase that can act as both a histone lysine demethylase and a ribosomal histidine hydroxylase. Specifically demethylates 'Lys-4' (H3K4me) and 'Lys-36' (H3K36me) of histone H3, thereby playing a central role in histone code. In Drosophila erecta (Fruit fly), this protein is Bifunctional lysine-specific demethylase and histidyl-hydroxylase NO66.